A 333-amino-acid chain; its full sequence is Autoinducer 2 import system permease protein LsrD (333 aa).

10 helical membrane-spanning segments follow: residues 7–27, 45–65, 70–90, 91–111, 118–138, 162–182, 212–232, 240–260, 261–281, and 288–308; these read YGWE…FGIA, ICIG…GIDI, TIGL…PMAA, AIPL…ALIL, LVIT…LSGI, LFGL…CWLF, TLYL…IVLV, SDLG…GGAN, IYGG…IGYL, and AGVP…IAVV.

This sequence belongs to the binding-protein-dependent transport system permease family. AraH/RbsC subfamily. As to quaternary structure, the complex is composed of two ATP-binding proteins (LsrA), two transmembrane proteins (LsrC and LsrD) and a solute-binding protein (LsrB).

The protein localises to the cell inner membrane. Functionally, part of the ABC transporter complex LsrABCD involved in autoinducer 2 (AI-2) import. Probably responsible for the translocation of the substrate across the membrane. This chain is Autoinducer 2 import system permease protein LsrD (lsrD), found in Photorhabdus laumondii subsp. laumondii (strain DSM 15139 / CIP 105565 / TT01) (Photorhabdus luminescens subsp. laumondii).